Here is a 552-residue protein sequence, read N- to C-terminus: Cholesterol oxidase (552 aa).

The segment at residues 1–45 is a signal peptide (tat-type signal); it reads MTDSRANRADATRGVASVSRRRFLAGAGLTAGAIALSSMSTSASA. Residues Tyr-66, Gly-67, Glu-86, Gly-160, Asn-164, Gly-165, Met-167, and Val-295 each contribute to the FAD site. Residues Glu-406 and His-492 each act as proton acceptor in the active site. Residues Gly-520 and Phe-532 each coordinate FAD.

Belongs to the GMC oxidoreductase family. The cofactor is FAD. In terms of processing, predicted to be exported by the Tat system. The position of the signal peptide cleavage has been experimentally proven.

The protein localises to the secreted. It catalyses the reaction cholesterol + O2 = cholest-5-en-3-one + H2O2. The enzyme catalyses cholest-5-en-3-one = cholest-4-en-3-one. It functions in the pathway steroid metabolism; cholesterol degradation. Functionally, bifunctional enzyme that catalyzes the oxidation and isomerization of cholesterol to cholestenone (cholest-4-en-3-one), an initial step in the cholesterol degradation process. The sequence is that of Cholesterol oxidase from Brevibacterium sterolicum.